The following is a 330-amino-acid chain: Biotin synthase (330 aa).

Residues 42-268 (YYGRKVKLNM…INPSKEIRIA (227 aa)) enclose the Radical SAM core domain. Positions 60, 64, and 67 each coordinate [4Fe-4S] cluster. Cys-103, Cys-136, Cys-196, and Arg-266 together coordinate [2Fe-2S] cluster.

It belongs to the radical SAM superfamily. Biotin synthase family. As to quaternary structure, homodimer. The cofactor is [4Fe-4S] cluster. [2Fe-2S] cluster is required as a cofactor.

It catalyses the reaction (4R,5S)-dethiobiotin + (sulfur carrier)-SH + 2 reduced [2Fe-2S]-[ferredoxin] + 2 S-adenosyl-L-methionine = (sulfur carrier)-H + biotin + 2 5'-deoxyadenosine + 2 L-methionine + 2 oxidized [2Fe-2S]-[ferredoxin]. It participates in cofactor biosynthesis; biotin biosynthesis; biotin from 7,8-diaminononanoate: step 2/2. Functionally, catalyzes the conversion of dethiobiotin (DTB) to biotin by the insertion of a sulfur atom into dethiobiotin via a radical-based mechanism. The sequence is that of Biotin synthase from Macrococcus caseolyticus (strain JCSC5402) (Macrococcoides caseolyticum).